The following is a 199-amino-acid chain: NAD(P)H dehydrogenase (quinone) (199 aa).

The Flavodoxin-like domain maps to 4-190 (MLVLYYSAYG…DGARFQGRRV (187 aa)). Residues 10–15 (SAYGYM) and 78–80 (TRY) each bind FMN. Residue Tyr-12 coordinates NAD(+). Residue Trp-98 coordinates substrate. FMN is bound by residues 113 to 119 (STATQHG) and His-134. Positions 158–181 (GAPYGMTTTADGDGSRQPSAQELD) are disordered. The span at 163 to 177 (MTTTADGDGSRQPSA) shows a compositional bias: polar residues.

The protein belongs to the WrbA family. Requires FMN as cofactor.

It carries out the reaction a quinone + NADH + H(+) = a quinol + NAD(+). The enzyme catalyses a quinone + NADPH + H(+) = a quinol + NADP(+). The sequence is that of NAD(P)H dehydrogenase (quinone) from Brucella abortus (strain S19).